The sequence spans 159 residues: Ribosome maturation factor RimP (159 aa).

This sequence belongs to the RimP family.

It localises to the cytoplasm. Functionally, required for maturation of 30S ribosomal subunits. The polypeptide is Ribosome maturation factor RimP (Trichlorobacter lovleyi (strain ATCC BAA-1151 / DSM 17278 / SZ) (Geobacter lovleyi)).